The primary structure comprises 133 residues: Ribosome-binding factor A (133 aa).

The protein belongs to the RbfA family. Monomer. Binds 30S ribosomal subunits, but not 50S ribosomal subunits or 70S ribosomes.

Its subcellular location is the cytoplasm. One of several proteins that assist in the late maturation steps of the functional core of the 30S ribosomal subunit. Associates with free 30S ribosomal subunits (but not with 30S subunits that are part of 70S ribosomes or polysomes). Required for efficient processing of 16S rRNA. May interact with the 5'-terminal helix region of 16S rRNA. The sequence is that of Ribosome-binding factor A from Nostoc sp. (strain PCC 7120 / SAG 25.82 / UTEX 2576).